A 611-amino-acid chain; its full sequence is Chaperone protein HtpG (611 aa).

Residues 1 to 326 (MSETLERHAF…TEDLPLNVSR (326 aa)) form an a; substrate-binding region. A b region spans residues 327-536 (EMLQATPVLA…SGGPDLQMQR (210 aa)). Residues 537 to 611 (LLRRAGRGFG…RVATALAAQG (75 aa)) are c.

This sequence belongs to the heat shock protein 90 family. In terms of assembly, homodimer.

It is found in the cytoplasm. Functionally, molecular chaperone. Has ATPase activity. The chain is Chaperone protein HtpG from Methylobacterium nodulans (strain LMG 21967 / CNCM I-2342 / ORS 2060).